The chain runs to 898 residues: Protein kintoun (898 aa).

2 disordered regions span residues Gly558–Asp680 and Ile765–Ser822. The segment covering Ile575–Gly602 has biased composition (basic and acidic residues). Basic residues predominate over residues Lys603–Arg616. Over residues Asn641–Thr656 the composition is skewed to polar residues.

It belongs to the PIH1 family. Kintoun subfamily.

The protein localises to the cytoplasm. In terms of biological role, required for cytoplasmic pre-assembly of axonemal dyneins, thereby playing a central role in motility in cilia and flagella. Involved in pre-assembly of dynein arm complexes in the cytoplasm before intraflagellar transport loads them for the ciliary compartment. In Aedes aegypti (Yellowfever mosquito), this protein is Protein kintoun.